The sequence spans 423 residues: Imidazolonepropionase (423 aa).

The Fe(3+) site is built by His78 and His80. Residues His78 and His80 each contribute to the Zn(2+) site. Residues Arg87, Tyr150, and His183 each coordinate 4-imidazolone-5-propanoate. Tyr150 is an N-formimidoyl-L-glutamate binding site. His247 lines the Fe(3+) pocket. A Zn(2+)-binding site is contributed by His247. Glu250 is a binding site for 4-imidazolone-5-propanoate. A Fe(3+)-binding site is contributed by Asp322. Asp322 contacts Zn(2+). Asn324 and Gly326 together coordinate N-formimidoyl-L-glutamate. Position 327 (Ser327) interacts with 4-imidazolone-5-propanoate.

This sequence belongs to the metallo-dependent hydrolases superfamily. HutI family. Zn(2+) is required as a cofactor. Fe(3+) serves as cofactor.

It is found in the cytoplasm. It catalyses the reaction 4-imidazolone-5-propanoate + H2O = N-formimidoyl-L-glutamate. It participates in amino-acid degradation; L-histidine degradation into L-glutamate; N-formimidoyl-L-glutamate from L-histidine: step 3/3. Catalyzes the hydrolytic cleavage of the carbon-nitrogen bond in imidazolone-5-propanoate to yield N-formimidoyl-L-glutamate. It is the third step in the universal histidine degradation pathway. This is Imidazolonepropionase from Bacillus anthracis (strain A0248).